Consider the following 439-residue polypeptide: MSQDLIETTATTTKIVEARELGHQIHDSLLEQLKLQQEELLQQQRDLFFQEQQLQLQQQVTQPVSNNGNTWSFTQGLVIGQVSVIFIIIVFVKFFVFADSSSHIPTKPGLDGAIGVIVKRNKNKKHSNGQFANDGENEDDTSLDSNQSKISSILEKTYYDVNNHASESLDWFNVLVAQTISQLRSEALLKDNIYHSLNNFLTNAKLPDFIDTINLTEIDIGDDFPIFSNCRIKYGEDLKRLEAKIDVDLSDTLTLGIATKLLLNQPRPLTAVLPVSLTVSIVRFSGCLTVSLINTKDIDLKNVDKTSNMNGYSKENANGDGASSSNNDEDEDDGGTALMFSFSPDYRLEFIVKSLIGSRAKLQDVPKISSLIENQLRTWFIERCVEPRFQVVRLPSLWPRTKNTREPVTKKTTTTPSTTVNGTSAATITTPGEYVNSNI.

At 1–76 (MSQDLIETTA…NGNTWSFTQG (76 aa)) the chain is on the lumenal side. Residues 77–97 (LVIGQVSVIFIIIVFVKFFVF) form a helical membrane-spanning segment. Residues 98-439 (ADSSSHIPTK…TPGEYVNSNI (342 aa)) are Cytoplasmic-facing. Disordered stretches follow at residues 125–145 (KHSN…SLDS), 309–336 (MNGY…DGGT), and 405–425 (REPV…GTSA). The SMP-LTD domain occupies 165-395 (ASESLDWFNV…EPRFQVVRLP (231 aa)). 2 stretches are compositionally biased toward low complexity: residues 315 to 326 (ENANGDGASSSN) and 410 to 424 (KKTT…NGTS).

Belongs to the MMM1 family. In terms of assembly, homodimer. Component of the ER-mitochondria encounter structure (ERMES) or MDM complex, composed of MMM1, MDM10, MDM12 and MDM34. An MMM1 homodimer associates with one molecule of MDM12 on each side in a pairwise head-to-tail manner, and the SMP-LTD domains of MMM1 and MDM12 generate a continuous hydrophobic tunnel for phospholipid trafficking.

The protein localises to the endoplasmic reticulum membrane. In terms of biological role, component of the ERMES/MDM complex, which serves as a molecular tether to connect the endoplasmic reticulum (ER) and mitochondria. Components of this complex are involved in the control of mitochondrial shape and protein biogenesis, and function in nonvesicular lipid trafficking between the ER and mitochondria. The MDM12-MMM1 subcomplex functions in the major beta-barrel assembly pathway that is responsible for biogenesis of all outer membrane beta-barrel proteins, and acts in a late step after the SAM complex. The MDM10-MDM12-MMM1 subcomplex further acts in the TOM40-specific pathway after the action of the MDM12-MMM1 complex. Essential for establishing and maintaining the structure of mitochondria and maintenance of mtDNA nucleoids. This is Maintenance of mitochondrial morphology protein 1 from Candida albicans (strain WO-1) (Yeast).